The sequence spans 335 residues: PA-phosphatase related-family protein DDB_G0275547 (335 aa).

The next 6 membrane-spanning stretches (helical) occupy residues 43 to 63 (VMYLFDWMMVVILLIVGGILF), 93 to 113 (VLIPVIIALPLAIIIVVSLIV), 124 to 144 (ILGLAQSLALTLLLTGSFKCF), 202 to 222 (SITAASFGFLALFIHAKFKIF), 226 to 246 (GHIFLYVIVSGCIIGAGLIGI), and 254 to 274 (HTFLNVLAGWSIGLIIALSCY).

Belongs to the PA-phosphatase related phosphoesterase family.

The protein localises to the membrane. This is PA-phosphatase related-family protein DDB_G0275547 from Dictyostelium discoideum (Social amoeba).